The sequence spans 299 residues: Probable lipid kinase YegS (299 aa).

The DAGKc domain maps to 2–133 (AEFPASLLIL…IDMAQVNKQT (132 aa)). ATP contacts are provided by residues T40, 66 to 72 (GDGTINE), and T95. Residues L215, D218, and L220 each coordinate Mg(2+). Catalysis depends on E271, which acts as the Proton acceptor.

Belongs to the diacylglycerol/lipid kinase family. YegS lipid kinase subfamily. Requires Mg(2+) as cofactor. Ca(2+) is required as a cofactor.

It is found in the cytoplasm. Probably phosphorylates lipids; the in vivo substrate is unknown. The sequence is that of Probable lipid kinase YegS from Escherichia coli (strain 55989 / EAEC).